Consider the following 1096-residue polypeptide: DNA-directed RNA polymerase subunit beta (1096 aa).

Belongs to the RNA polymerase beta chain family. In plastids the minimal PEP RNA polymerase catalytic core is composed of four subunits: alpha, beta, beta', and beta''. When a (nuclear-encoded) sigma factor is associated with the core the holoenzyme is formed, which can initiate transcription.

The protein localises to the plastid. It localises to the chloroplast. The catalysed reaction is RNA(n) + a ribonucleoside 5'-triphosphate = RNA(n+1) + diphosphate. Its function is as follows. DNA-dependent RNA polymerase catalyzes the transcription of DNA into RNA using the four ribonucleoside triphosphates as substrates. This Guillardia theta (Cryptophyte) protein is DNA-directed RNA polymerase subunit beta.